The chain runs to 203 residues: Recombination protein RecR (203 aa).

The C4-type zinc finger occupies 56-71; that stretch reads CEVCGNVSDADRCRIC. In terms of domain architecture, Toprim spans 79–179; sequence SLVCVVEEPK…TVTRIASGLP (101 aa).

Belongs to the RecR family.

May play a role in DNA repair. It seems to be involved in an RecBC-independent recombinational process of DNA repair. It may act with RecF and RecO. This is Recombination protein RecR from Mycobacterium sp. (strain JLS).